The following is a 104-amino-acid chain: Large ribosomal subunit protein uL24 (104 aa).

Belongs to the universal ribosomal protein uL24 family. As to quaternary structure, part of the 50S ribosomal subunit.

One of two assembly initiator proteins, it binds directly to the 5'-end of the 23S rRNA, where it nucleates assembly of the 50S subunit. Its function is as follows. One of the proteins that surrounds the polypeptide exit tunnel on the outside of the subunit. The polypeptide is Large ribosomal subunit protein uL24 (Pseudomonas savastanoi pv. phaseolicola (strain 1448A / Race 6) (Pseudomonas syringae pv. phaseolicola (strain 1448A / Race 6))).